Consider the following 368-residue polypeptide: Phospho-N-acetylmuramoyl-pentapeptide-transferase (368 aa).

10 consecutive transmembrane segments (helical) span residues 32–52, 79–99, 102–122, 142–160, 176–196, 207–227, 244–264, 271–291, 296–316, and 345–365; these read TGGAVVTGALFVFLFGPWIID, TPTMGGLMILSGLVVSTVLWA, LNPYVWIVLAVTLGFGLIGFY, LLLELLIALAACYALTRLG, VALDLGWFFLGFGAFIIVGAG, GLAIVPVMIAAASFAMIAYLA, AGELAVLCGAVLGAGLGFLWF, IFMGDTGSLALGGMLGSIAVA, IVLAVIGGLFVLEAVSVIVQV, and QIVIRFWIISVMLALAGLSTL.

It belongs to the glycosyltransferase 4 family. MraY subfamily. It depends on Mg(2+) as a cofactor.

It is found in the cell inner membrane. It catalyses the reaction UDP-N-acetyl-alpha-D-muramoyl-L-alanyl-gamma-D-glutamyl-meso-2,6-diaminopimeloyl-D-alanyl-D-alanine + di-trans,octa-cis-undecaprenyl phosphate = di-trans,octa-cis-undecaprenyl diphospho-N-acetyl-alpha-D-muramoyl-L-alanyl-D-glutamyl-meso-2,6-diaminopimeloyl-D-alanyl-D-alanine + UMP. It participates in cell wall biogenesis; peptidoglycan biosynthesis. Its function is as follows. Catalyzes the initial step of the lipid cycle reactions in the biosynthesis of the cell wall peptidoglycan: transfers peptidoglycan precursor phospho-MurNAc-pentapeptide from UDP-MurNAc-pentapeptide onto the lipid carrier undecaprenyl phosphate, yielding undecaprenyl-pyrophosphoryl-MurNAc-pentapeptide, known as lipid I. In Nitrobacter winogradskyi (strain ATCC 25391 / DSM 10237 / CIP 104748 / NCIMB 11846 / Nb-255), this protein is Phospho-N-acetylmuramoyl-pentapeptide-transferase.